A 513-amino-acid polypeptide reads, in one-letter code: Exoglucanase 1 (513 aa).

A signal peptide spans M1–A17. Q18 carries the post-translational modification Pyrrolidone carboxylic acid. Residues Q18–N453 form a catalytic region. Intrachain disulfides connect C21–C89, C36–C42, C67–C88, C78–C84, C155–C414, C189–C227, C193–C226, C247–C273, C255–C260, and C278–C348. N62 carries an N-linked (GlcNAc) asparagine glycan. Residue E229 is the Nucleophile of the active site. E234 functions as the Proton donor/acceptor in the catalytic mechanism. N-linked (GlcNAc) asparagine glycans are attached at residues N287 and N401. The segment covering N401–N437 has biased composition (polar residues). A disordered region spans residues N401–S480. A compositionally biased stretch (gly residues) spans P449–R459. The tract at residues P454–P477 is linker. Low complexity predominate over residues G460 to T478. Residue T461 is glycosylated (O-linked (Man) threonine). 3 O-linked (Man...) threonine glycosylation sites follow: T462, T463, and T464. An O-linked (Man) threonine glycan is attached at T469. Residues T470 and T471 are each glycosylated (O-linked (Man...) threonine). S473 and S474 each carry an O-linked (Man) serine glycan. Residues P477 to L513 form the CBM1 domain. T478 carries an O-linked (Man) threonine glycan. Residues S480 and S491 are each glycosylated (O-linked (Man) serine). Disulfide bonds link C485/C502 and C496/C512.

This sequence belongs to the glycosyl hydrolase 7 (cellulase C) family. Post-translationally, N-glycosylated. The catalytic core domain comprises three N-linked glycans which each consist of a single N-acetylglucosamine residue. In terms of processing, O-glycosylated. Within the linker domain, all 8 threonines are variably glycosylated with between at least one, and up to three, mannose residues per site. All serines in this domain are at least partially glycosylated with a single mannose residue. O-glycosylation of the cellulase linker provides protection from proteolysis. Linker glycans also contribute to binding affinity of cellobiohydrolases to cellulose.

It localises to the secreted. It carries out the reaction Hydrolysis of (1-&gt;4)-beta-D-glucosidic linkages in cellulose and cellotetraose, releasing cellobiose from the non-reducing ends of the chains.. In terms of biological role, exocellobiohydrolases (CBH) that catalyzes the hydrolysis of 1,4-beta-D-glucosidic bonds in cellulose to release the disaccharide cellobiose. The degradation of cellulose involves an interplay between different cellulolytic enzymes. Hydrolysis starts with endoglucanases (EGs), which cut internal beta-1,4-glucosidic bonds in cellulose to reduce the polymerization degree of the substrate and create new chain ends for exocellobiohydrolases (CBHs). The CBHs release the disaccharide cellobiose from the non-reducing end of the cellulose polymer chain. Finally, beta-1,4-glucosidases hydrolyze the cellobiose and other short cello-oligosaccharides into glucose units. In Hypocrea jecorina (Trichoderma reesei), this protein is Exoglucanase 1 (cbh1).